The following is a 232-amino-acid chain: H-2 class II histocompatibility antigen, E-S beta chain (232 aa).

A beta-1 region spans residues 1-90 (WFLEYSTSEC…LDKFLVPRRV (90 aa)). The Extracellular portion of the chain corresponds to 1–193 (WFLEYSTSEC…KAQSTSAQNK (193 aa)). Intrachain disulfides connect Cys10-Cys74 and Cys112-Cys168. The N-linked (GlcNAc...) asparagine glycan is linked to Asn14. The beta-2 stretch occupies residues 91-193 (EPTVTVYPTK…KAQSTSAQNK (103 aa)). The region spanning 92 to 182 (PTVTVYPTKT…PSLTDPVTVE (91 aa)) is the Ig-like C1-type domain. Residues 194–216 (MLSGVGGFVLGLLFLGAGLFIYF) traverse the membrane as a helical segment. Over 217–232 (RNQKGQSGLQPTGLLS) the chain is Cytoplasmic.

It belongs to the MHC class II family. In terms of processing, ubiquitinated in immature dendritic cells leading to down-regulation of MHC class II.

The protein localises to the membrane. This is H-2 class II histocompatibility antigen, E-S beta chain (H2-Eb1) from Mus musculus (Mouse).